The following is a 541-amino-acid chain: Protein wntless homolog (541 aa).

Over Met-1–Cys-15 the chain is Cytoplasmic. A helical transmembrane segment spans residues Ile-16–Ala-36. Topologically, residues Pro-37–Lys-232 are lumenal. The segment at Met-101 to Lys-232 is interaction with Wnt proteins. The helical transmembrane segment at Val-233–Trp-253 threads the bilayer. Topologically, residues Arg-254 to Lys-268 are cytoplasmic. A helical membrane pass occupies residues Val-269 to Ile-289. Residues Gly-290 to Arg-303 lie on the Lumenal side of the membrane. The chain crosses the membrane as a helical span at residues Gln-304–Met-324. Residues Asp-325–His-331 lie on the Cytoplasmic side of the membrane. The helical transmembrane segment at Ile-332 to Phe-352 threads the bilayer. Residues Asp-353 to Ala-380 lie on the Lumenal side of the membrane. A helical transmembrane segment spans residues Phe-381–Phe-401. The Cytoplasmic portion of the chain corresponds to Gln-402–Arg-431. A helical transmembrane segment spans residues Phe-432 to Val-452. At Ser-453–Ser-471 the chain is on the lumenal side. Residues Ala-472 to Tyr-492 form a helical membrane-spanning segment. The Cytoplasmic portion of the chain corresponds to Ala-493–Glu-541.

This sequence belongs to the wntless family. In terms of assembly, interacts with WNT3A. Interacts with WNT1, WNT3 and WNT5A. Post-translationally, N-glycosylated.

The protein resides in the golgi apparatus membrane. It is found in the cytoplasmic vesicle membrane. It localises to the cell membrane. The protein localises to the endoplasmic reticulum membrane. Its subcellular location is the early endosome membrane. Its function is as follows. Regulates Wnt proteins sorting and secretion in a feedback regulatory mechanism. This reciprocal interaction plays a key role in the regulation of expression, subcellular location, binding and organelle-specific association of Wnt proteins. Plays also an important role in establishment of the anterior-posterior body axis formation during development. This chain is Protein wntless homolog (WLS), found in Homo sapiens (Human).